A 353-amino-acid polypeptide reads, in one-letter code: MSLLTDTITRIGSLDSAAATAAQARQDVLTKPQGALGRLETLSVQIAGITGQTRPRLNNPAVIVMAADHGVARRGVSAYPSEVTSQMVLNFLNGGAAINVLARHIGARVIVVDIGVAANLPSHSELIDRKLGMGTADFSVEPAMSRAQAQQAVEIGIACAYDAIASGVDLLATGDMGIGNTTASSAVVAAITGRPVAEVTGRGAGIDDAGLARKIAVIEQALALHHPDPRDALDVLTKVGGFEIGGLAGVILGAAARRVPVVIDGFISGAAALIACTLAPSAQPFLIAALRSVERGHDAVFAHLDLTPLFDLGMRLGEGTGAVLGMSLCQAACKILDEMATFGEAGVSGKVEG.

Glu318 (proton acceptor) is an active-site residue.

The protein belongs to the CobT family.

The catalysed reaction is 5,6-dimethylbenzimidazole + nicotinate beta-D-ribonucleotide = alpha-ribazole 5'-phosphate + nicotinate + H(+). The protein operates within nucleoside biosynthesis; alpha-ribazole biosynthesis; alpha-ribazole from 5,6-dimethylbenzimidazole: step 1/2. Catalyzes the synthesis of alpha-ribazole-5'-phosphate from nicotinate mononucleotide (NAMN) and 5,6-dimethylbenzimidazole (DMB). The sequence is that of Nicotinate-nucleotide--dimethylbenzimidazole phosphoribosyltransferase from Roseiflexus castenholzii (strain DSM 13941 / HLO8).